The following is a 527-amino-acid chain: TnpB-like protein R854 (527 aa).

The span at 21–36 shows a compositional bias: basic residues; sequence GSKTKKKVFVKKKPPA. The interval 21-50 is disordered; the sequence is GSKTKKKVFVKKKPPAKKPPDKKPLKKTTK. Residues C481, C484, C498, and C501 each coordinate Zn(2+).

The protein in the central section; belongs to the transposase 2 family. It in the C-terminal section; belongs to the transposase 35 family.

The protein is TnpB-like protein R854 of Acanthamoeba polyphaga mimivirus (APMV).